We begin with the raw amino-acid sequence, 167 residues long: T-cell surface glycoprotein CD3 delta chain (167 aa).

Positions 1–21 are cleaved as a signal peptide; that stretch reads MEHSRCLSCLILAALLSQVNP. The Extracellular segment spans residues 22-100; sequence RALEVLEAED…NCVELDSATL (79 aa). A disulfide bridge connects residues C37 and C73. N38 and N55 each carry an N-linked (GlcNAc...) asparagine glycan. The chain crosses the membrane as a helical span at residues 101-121; the sequence is AGLIITDIIATVLLALGVYCF. Residues 122-167 lie on the Cytoplasmic side of the membrane; that stretch reads AGHETGRFSRAADTQVLMGNDQLYQPLRERNDAQYSRLGDKWARNK. The ITAM domain occupies 134–162; the sequence is DTQVLMGNDQLYQPLRERNDAQYSRLGDK. 2 positions are modified to phosphotyrosine: Y145 and Y156.

The TCR-CD3 complex is composed of a CD3D/CD3E and a CD3G/CD3E heterodimers that preferentially associate with TCRalpha and TCRbeta, respectively, to form TCRalpha/CD3E/CD3G and TCRbeta/CD3G/CD3E trimers. In turn, the hexamer interacts with CD3Z homodimer to form the TCR-CD3 complex. Alternatively, TCRalpha and TCRbeta can be replaced by TCRgamma and TCRdelta. Interacts with coreceptors CD4 and CD8. Phosphorylated on Tyr residues after T-cell receptor triggering by LCK in association with CD4/CD8. As to expression, CD3D is mostly present on T-lymphocytes with its TCR-CD3 partners. Present also in fetal NK-cells.

It localises to the cell membrane. In terms of biological role, part of the TCR-CD3 complex present on T-lymphocyte cell surface that plays an essential role in adaptive immune response. When antigen presenting cells (APCs) activate T-cell receptor (TCR), TCR-mediated signals are transmitted across the cell membrane by the CD3 chains CD3D, CD3E, CD3G and CD3Z. All CD3 chains contain immunoreceptor tyrosine-based activation motifs (ITAMs) in their cytoplasmic domain. Upon TCR engagement, these motifs become phosphorylated by Src family protein tyrosine kinases LCK and FYN, resulting in the activation of downstream signaling pathways. In addition of this role of signal transduction in T-cell activation, CD3D plays an essential role in thymocyte differentiation. Indeed, participates in correct intracellular TCR-CD3 complex assembly and surface expression. In absence of a functional TCR-CD3 complex, thymocytes are unable to differentiate properly. Interacts with CD4 and CD8 and thus serves to establish a functional link between the TCR and coreceptors CD4 and CD8, which is needed for activation and positive selection of CD4 or CD8 T-cells. In Ovis aries (Sheep), this protein is T-cell surface glycoprotein CD3 delta chain (CD3D).